A 423-amino-acid polypeptide reads, in one-letter code: GTPase HflX (423 aa).

One can recognise a Hflx-type G domain in the interval 201 to 363 (IQLALVGYTN…KIEQALKGMM (163 aa)). Residues 207-214 (GYTNAGKS), 232-236 (FATLD), 254-257 (DTVG), 320-323 (NKAD), and 341-343 (SAY) each bind GTP. Mg(2+) contacts are provided by S214 and T234.

The protein belongs to the TRAFAC class OBG-HflX-like GTPase superfamily. HflX GTPase family. Monomer. Associates with the 50S ribosomal subunit. Mg(2+) is required as a cofactor.

It localises to the cytoplasm. GTPase that associates with the 50S ribosomal subunit and may have a role during protein synthesis or ribosome biogenesis. In Alkalihalophilus pseudofirmus (strain ATCC BAA-2126 / JCM 17055 / OF4) (Bacillus pseudofirmus), this protein is GTPase HflX.